The chain runs to 563 residues: Arginine--tRNA ligase (563 aa).

Positions 122 to 132 match the 'HIGH' region motif; sequence PNIAKPMSMGH.

It belongs to the class-I aminoacyl-tRNA synthetase family. Monomer.

The protein localises to the cytoplasm. The catalysed reaction is tRNA(Arg) + L-arginine + ATP = L-arginyl-tRNA(Arg) + AMP + diphosphate. This chain is Arginine--tRNA ligase, found in Ligilactobacillus salivarius (strain UCC118) (Lactobacillus salivarius).